A 251-amino-acid chain; its full sequence is Bidirectional sugar transporter SWEET4 (251 aa).

Over 1 to 12 (MVNATVARNIAG) the chain is Extracellular. N-linked (GlcNAc...) asparagine glycosylation occurs at asparagine 3. The region spanning 12–96 (GICGNVISLF…LAIFFFFSPT (85 aa)) is the MtN3/slv 1 domain. Residues 13–33 (ICGNVISLFLFLSPIPTFITI) traverse the membrane as a helical segment. The Cytoplasmic segment spans residues 34-45 (YKKKKVEEYKAD). Residues 46 to 66 (PYLATVLNCALWVFYGLPMVQ) traverse the membrane as a helical segment. Topologically, residues 67–72 (PDSLLV) are extracellular. A helical transmembrane segment spans residues 73–93 (ITINGTGLAIELVYLAIFFFF). The Cytoplasmic portion of the chain corresponds to 94-103 (SPTSRKVKVG). The chain crosses the membrane as a helical span at residues 104–124 (LWLIGEMVFVGIVATCTLLLF). The Extracellular portion of the chain corresponds to 125–132 (HTHNQRSS). The helical transmembrane segment at 133-153 (FVGIFCVIFVSLMYIAPLTIM) threads the bilayer. The MtN3/slv 2 domain occupies 133–216 (FVGIFCVIFV…LILYACYYKT (84 aa)). At 154 to 163 (SKVIKTKSVK) the chain is on the cytoplasmic side. The helical transmembrane segment at 164 to 186 (YMPFSLSLANFLNGVVWVIYALI) threads the bilayer. Over 187 to 190 (KFDL) the chain is Extracellular. Residues 191–213 (FILIGNGLGTVSGAVQLILYACY) traverse the membrane as a helical segment. The Cytoplasmic segment spans residues 214-251 (YKTTPKDDEDEEDEENLSKVNSQLQLSGNSGQAKRVSA). Positions 220 to 251 (DDEDEEDEENLSKVNSQLQLSGNSGQAKRVSA) are disordered. A compositionally biased stretch (polar residues) spans 231–245 (SKVNSQLQLSGNSGQ).

Belongs to the SWEET sugar transporter family. Forms homooligomers and heterooligomers with SWEET8 and SWEET17.

The protein localises to the cell membrane. Its function is as follows. Mediates both low-affinity uptake and efflux of sugar across the plasma membrane. This Arabidopsis thaliana (Mouse-ear cress) protein is Bidirectional sugar transporter SWEET4.